A 712-amino-acid chain; its full sequence is Nucleolin (712 aa).

The disordered stretch occupies residues 1-305 (MVKLAKAGKN…KKQKVEGTEP (305 aa)). An N6-acetyllysine mark is found at Lys9, Lys15, and Lys16. The segment covering 24-43 (VEEDSEDEEMSEDEEDDSSG) has biased composition (acidic residues). 4 positions are modified to phosphoserine: Ser28, Ser34, Ser41, and Ser42. Low complexity predominate over residues 56–107 (AAATSAKKVVVSPTKKVAVATPAKKAAVTPGKKAAATPAKKTVTPAKAVTTP). Copy 1 of the repeat occupies 58–65 (ATSAKKVV). The segment at 58–135 (ATSAKKVVVS…GAAIPAKGAK (78 aa)) is 8 X 8 AA tandem repeats of X-T-P-X-K-K-X-X. Ser67 is subject to Phosphoserine. A phosphothreonine mark is found at Thr69, Thr76, Thr84, and Thr92. A run of 3 repeats spans residues 75–82 (ATPAKKAA), 83–90 (VTPGKKAA), and 91–98 (ATPAKKTV). Position 96 is an N6-acetyllysine (Lys96). At Thr99 the chain carries Phosphothreonine. Residues 99–104 (TPAKAV) form a 5; truncated repeat. Lys102 is modified (N6-acetyllysine). Copy 6 of the repeat occupies 105-112 (TTPGKKGA). Thr106 carries the post-translational modification Phosphothreonine. Lys109 bears the N6-acetyllysine mark. Thr113 bears the Phosphothreonine mark. Lys116 is modified (N6-acetyllysine). 2 consecutive repeat copies span residues 120-127 (ATPGKKGA) and 128-135 (AIPAKGAK). At Thr121 the chain carries Phosphothreonine. Residues 122–137 (PGKKGAAIPAKGAKNG) are compositionally biased toward low complexity. N6-acetyllysine is present on Lys124. 2 positions are modified to phosphoserine: Ser145 and Ser153. A compositionally biased stretch (acidic residues) spans 145 to 171 (SDEEEEDDSEEDEDDDEDEDEDEDEIE). Residues 172–183 (PAAMKAAAAAPA) show a composition bias toward low complexity. Phosphoserine occurs at positions 184 and 206. The span at 184 to 211 (SEDEDDEDDEDDEDEDDDEEDDSEEEAM) shows a compositional bias: acidic residues. Thr214 is subject to Phosphothreonine. Acidic residues predominate over residues 234 to 274 (EDEDEEEDDEDEDDDDDDDDDDEDDEDEDDEEEEEEEEEEP). Over residues 275–302 (VKEAPGKRKKEMAKQKAAPEAKKQKVEG) the composition is skewed to basic and acidic residues. Lys299 participates in a covalent cross-link: Glycyl lysine isopeptide (Lys-Gly) (interchain with G-Cter in SUMO1); alternate. Residue Lys299 forms a Glycyl lysine isopeptide (Lys-Gly) (interchain with G-Cter in SUMO2); alternate linkage. At Thr303 the chain carries Phosphothreonine. RRM domains follow at residues 309–385 (FNLF…KPKG) and 395–468 (RTLL…YTGE). Lys320 carries the post-translational modification N6-acetyllysine. Lys326 is covalently cross-linked (Glycyl lysine isopeptide (Lys-Gly) (interchain with G-Cter in SUMO1); alternate). A Glycyl lysine isopeptide (Lys-Gly) (interchain with G-Cter in SUMO2); alternate cross-link involves residue Lys326. Residue Lys350 is modified to N6-acetyllysine. A Phosphoserine modification is found at Ser358. Thr369 carries the post-translational modification Phosphothreonine. Lys372 participates in a covalent cross-link: Glycyl lysine isopeptide (Lys-Gly) (interchain with G-Cter in SUMO2). Lys379 participates in a covalent cross-link: Glycyl lysine isopeptide (Lys-Gly) (interchain with G-Cter in SUMO2); alternate. The residue at position 379 (Lys379) is an N6-acetyllysine; alternate. 2 positions are modified to N6-acetyllysine: Lys400 and Lys405. Position 407 is a phosphothreonine (Thr407). N6-acetyllysine occurs at positions 429 and 446. Phosphoserine occurs at positions 460 and 462. Lys469 and Lys479 each carry N6-acetyllysine. Residues 488–562 (KTLVLSNLSY…RAIRLELQGP (75 aa)) form the RRM 3 domain. Lys515 participates in a covalent cross-link: Glycyl lysine isopeptide (Lys-Gly) (interchain with G-Cter in SUMO2); alternate. Residue Lys515 is modified to N6-acetyllysine; alternate. N6-acetyllysine is present on Lys523. Ser565 is subject to Phosphoserine. Lys574 is subject to N6-acetyllysine. The RRM 4 domain occupies 574-649 (KTLFVKGLSE…NKVTLDWAKP (76 aa)). A Glycyl lysine isopeptide (Lys-Gly) (interchain with G-Cter in SUMO2); alternate cross-link involves residue Lys579. Lys579 bears the N6-acetyllysine; alternate mark. Ser582 is modified (phosphoserine). Lys591 participates in a covalent cross-link: Glycyl lysine isopeptide (Lys-Gly) (interchain with G-Cter in SUMO1); alternate. Lys591 participates in a covalent cross-link: Glycyl lysine isopeptide (Lys-Gly) (interchain with G-Cter in SUMO2); alternate. Phosphoserine is present on residues Ser593 and Ser621. Lys626 participates in a covalent cross-link: Glycyl lysine isopeptide (Lys-Gly) (interchain with G-Cter in SUMO2). Positions 642-712 (VTLDWAKPKG…KPQGKKTKFE (71 aa)) are disordered. At Lys648 the chain carries N6-acetyllysine. Residues 652-698 (EGGFGGRGGGRGGFGGRGGGRGGRGGFGGRGRGGFGGRGGFRGGRGG) are compositionally biased toward gly residues. Asymmetric dimethylarginine occurs at positions 658, 662, 668, 672, 675, 681, 683, 689, and 693. Arg696 carries the asymmetric dimethylarginine; alternate modification. Residue Arg696 is modified to Omega-N-methylarginine; alternate. Residues 699–712 (GGDHKPQGKKTKFE) show a composition bias toward basic and acidic residues.

As to quaternary structure, identified in a IGF2BP1-dependent mRNP granule complex containing untranslated mRNAs. Component of the SWAP complex that consists of NPM1, NCL/nucleolin, PARP1 and SWAP70. Component of a complex which is at least composed of HTATSF1/Tat-SF1, the P-TEFb complex components CDK9 and CCNT1, RNA polymerase II, SUPT5H, and NCL/nucleolin. Interacts with AICDA. Interacts with APTX. Interacts with C1QBP. Interacts with ERBB4. Interacts (via C-terminus) with FMR1 isoform 6 (via N-terminus). Interacts with GZF1; this interaction is important for nucleolar localization of GZF1. Interacts with NSUN2. Interacts with NVL. Interacts (via N-terminus domain) with SETX. Interacts (via RRM1 and C-terminal RRM4/Arg/Gly-rich domains) with TERT; the interaction is important for nucleolar localization of TERT. Interacts with WDR46. Interacts with ZFP36. Interacts with LRRC34. Interacts with RRP1B. Interacts with HNRNPU; this interaction occurs during mitosis. Interacts with RIOK1; RIOK1 recruits NCL to the PRMT5 for symmetrically methylation. Interacts with ZBTB7B. Interacts with MDK; this interaction promotes NCL clustering and lateral movements of this complex into lipid rafts leading to MDK internalization. Interacts with HDGF. Interacts with ALKBH2. Interacts with IGFBP5; this interaction is necessary for IGFBP5 localization to the nucleus. Interacts with DDX24 (when ubiquitinated); this interaction may be important during ribosome biogenesis. Some glutamate residues are glycylated by TTLL8. This modification occurs exclusively on glutamate residues and results in a glycine chain on the gamma-carboxyl group. In terms of processing, symmetrically methylated by PRMT5.

It is found in the nucleus. It localises to the nucleolus. The protein localises to the cytoplasm. Its function is as follows. Nucleolin is the major nucleolar protein of growing eukaryotic cells. It is found associated with intranucleolar chromatin and pre-ribosomal particles. It induces chromatin decondensation by binding to histone H1. It is thought to play a role in pre-rRNA transcription and ribosome assembly. May play a role in the process of transcriptional elongation. Binds RNA oligonucleotides with 5'-UUAGGG-3' repeats more tightly than the telomeric single-stranded DNA 5'-TTAGGG-3' repeats. The sequence is that of Nucleolin (NCL) from Pongo abelii (Sumatran orangutan).